The following is a 651-amino-acid chain: Peptidoglycan D,D-transpeptidase MrdA (651 aa).

A helical transmembrane segment spans residues 30 to 50; that stretch reads LVAFLGILLLTGVLFTNIYQL. Serine 338 functions as the Acyl-ester intermediate in the catalytic mechanism.

This sequence belongs to the transpeptidase family. MrdA subfamily.

The protein resides in the cell inner membrane. The enzyme catalyses Preferential cleavage: (Ac)2-L-Lys-D-Ala-|-D-Ala. Also transpeptidation of peptidyl-alanyl moieties that are N-acyl substituents of D-alanine.. It functions in the pathway cell wall biogenesis; peptidoglycan biosynthesis. Catalyzes cross-linking of the peptidoglycan cell wall. The sequence is that of Peptidoglycan D,D-transpeptidase MrdA from Haemophilus influenzae (strain ATCC 51907 / DSM 11121 / KW20 / Rd).